We begin with the raw amino-acid sequence, 104 residues long: Large ribosomal subunit protein uL24 (104 aa).

Belongs to the universal ribosomal protein uL24 family. In terms of assembly, part of the 50S ribosomal subunit.

One of two assembly initiator proteins, it binds directly to the 5'-end of the 23S rRNA, where it nucleates assembly of the 50S subunit. In terms of biological role, one of the proteins that surrounds the polypeptide exit tunnel on the outside of the subunit. This Flavobacterium psychrophilum (strain ATCC 49511 / DSM 21280 / CIP 103535 / JIP02/86) protein is Large ribosomal subunit protein uL24.